We begin with the raw amino-acid sequence, 409 residues long: MTKALEGIRVLDMTHVQSGPSATQLLAWLGADVVKLEAPTGDITRGQLRDLPDVDSLYFTMLNCNKRSITLNTKTERGKEILTELIRRSDVMVENFGPGAVDRMGFTWDRIRDINPRIVYASIKGFGDGPYTDFKAYEVVAQAMGGSMSTTGFEDGPPLATGAQIGDSGTGIHAVAGILAALYQRENTGRGQRVNVAMQHAVLNLCRVKLRDQQRLAHGPLAEYPNDDFGDEVPRSGNASGGGQPGWAVKCAPGGPNDYVYVIVQPVGWKPLSELIGRPELADDPEWATPEARLPQLTKMFQLIEEWSATLPKWEVLEKLNAHNIPCGPILSTKEIVEDASLVANEMVVTVPHPERGEFVTVGSPLKLSDSPVDVTSSPLLGEHNAEVYVGELGLGDEELRLLKSNGVI.

Residues 17–18, 71–74, 95–97, Arg103, and 135–138 each bind CoA; these read QS, LNTK, NFG, and KAYE. Asp167 functions as the Nucleophile in the catalytic mechanism. The disordered stretch occupies residues 221-245; sequence LAEYPNDDFGDEVPRSGNASGGGQP. 242 to 244 lines the substrate pocket; the sequence is GGQ.

The protein belongs to the CoA-transferase III family. Frc subfamily. Homodimer.

It carries out the reaction formyl-CoA + oxalate = oxalyl-CoA + formate. It functions in the pathway metabolic intermediate degradation; oxalate degradation; CO(2) and formate from oxalate: step 1/2. Its function is as follows. Involved in the catabolism of oxalate and in the adapatation to low pH via the induction of the oxalate-dependent acid tolerance response (ATR). Catalyzes the transfer of the CoA moiety from formyl-CoA to oxalate. The polypeptide is Formyl-CoA:oxalate CoA-transferase (Streptomyces avermitilis (strain ATCC 31267 / DSM 46492 / JCM 5070 / NBRC 14893 / NCIMB 12804 / NRRL 8165 / MA-4680)).